A 760-amino-acid polypeptide reads, in one-letter code: ATP-dependent RNA helicase dbp7 (760 aa).

The span at 23 to 34 shows a compositional bias: basic and acidic residues; it reads KLKGGTWRDRLS. Residues 23–129 are disordered; that stretch reads KLKGGTWRDR…EPVEDAKPTN (107 aa). Basic residues predominate over residues 38–47; the sequence is IAQHRTKNPR. Over residues 58–72 the composition is skewed to polar residues; sequence KGPQNPNRIQVSSSR. Residues 77–94 show a composition bias toward basic and acidic residues; that stretch reads QKTDADGDNEKSRHDNKQ. The segment covering 99-110 has biased composition (polar residues); the sequence is FVSSLFSKNPTP. The short motif at 137–166 is the Q motif element; it reads DTFTNLGLSPSLAAHLLTKLELKAPTGIQK. Residues 170 to 372 form the Helicase ATP-binding domain; it reads SQLLKEDSDA…EISLKDAVHI (203 aa). ATP is bound at residue 183–190; the sequence is AETGSGKT. The DEAD box signature appears at 308–311; it reads DEGD. The Helicase C-terminal domain maps to 396–609; sequence QLKQSYAIVA…LTRTTAEDIL (214 aa). Disordered regions lie at residues 453-490 and 692-760; these read YRDE…AVAF and SKIN…FNLA. Residues 456 to 470 are compositionally biased toward acidic residues; it reads ESEDEDEEKEDDDED. Basic and acidic residues predominate over residues 701-716; the sequence is PGDKEAKKDYKAERNT. Residues 731–740 show a composition bias toward polar residues; that stretch reads QPSNDATSAA.

It belongs to the DEAD box helicase family. DDX31/DBP7 subfamily.

The protein resides in the nucleus. The protein localises to the nucleolus. The catalysed reaction is ATP + H2O = ADP + phosphate + H(+). In terms of biological role, ATP-binding RNA helicase involved in the biogenesis of 60S ribosomal subunits and is required for the normal formation of 25S and 5.8S rRNAs. The protein is ATP-dependent RNA helicase dbp7 (dbp7) of Aspergillus oryzae (strain ATCC 42149 / RIB 40) (Yellow koji mold).